Consider the following 185-residue polypeptide: Peptidyl-tRNA hydrolase (185 aa).

A tRNA-binding site is contributed by Tyr-14. The active-site Proton acceptor is His-19. Positions 64, 66, and 112 each coordinate tRNA.

This sequence belongs to the PTH family. As to quaternary structure, monomer.

Its subcellular location is the cytoplasm. It carries out the reaction an N-acyl-L-alpha-aminoacyl-tRNA + H2O = an N-acyl-L-amino acid + a tRNA + H(+). Functionally, hydrolyzes ribosome-free peptidyl-tRNAs (with 1 or more amino acids incorporated), which drop off the ribosome during protein synthesis, or as a result of ribosome stalling. In terms of biological role, catalyzes the release of premature peptidyl moieties from peptidyl-tRNA molecules trapped in stalled 50S ribosomal subunits, and thus maintains levels of free tRNAs and 50S ribosomes. This chain is Peptidyl-tRNA hydrolase, found in Lactobacillus delbrueckii subsp. bulgaricus (strain ATCC 11842 / DSM 20081 / BCRC 10696 / JCM 1002 / NBRC 13953 / NCIMB 11778 / NCTC 12712 / WDCM 00102 / Lb 14).